Here is a 211-residue protein sequence, read N- to C-terminus: 3-demethoxyubiquinol 3-hydroxylase (211 aa).

The Fe cation site is built by glutamate 60, glutamate 90, histidine 93, glutamate 142, glutamate 174, and histidine 177.

It belongs to the COQ7 family. Fe cation is required as a cofactor.

The protein resides in the cell membrane. It carries out the reaction a 5-methoxy-2-methyl-3-(all-trans-polyprenyl)benzene-1,4-diol + AH2 + O2 = a 3-demethylubiquinol + A + H2O. It functions in the pathway cofactor biosynthesis; ubiquinone biosynthesis. Catalyzes the hydroxylation of 2-nonaprenyl-3-methyl-6-methoxy-1,4-benzoquinol during ubiquinone biosynthesis. This is 3-demethoxyubiquinol 3-hydroxylase from Herminiimonas arsenicoxydans.